Here is a 716-residue protein sequence, read N- to C-terminus: MSFDHLLTSSKRRELLQNLGIGHGSDVFSTGLFRKAECNAETAISQRSIPRANPDHLRPIFDRFATKEIKGKKLMTPEDFIRGYLGLYTEENYNKETVRLLASAADTTKDGDISFEEFCAFEALLCSPDALYLTAFELFDRNASDTISCDEFEAVIRHTQPLHDQDFDFSSEFIKRYFGADKQRNVNYHSFCQLLHDFYEEQGIQAFKRYDKNGNGTISSLDFQQIMTTVKGHLLTDFVRHNLIAVSGGGASGHKFSDTRGGFVTFPYYAAFNSLLAKMELIKRVYVSTTRGNLDIEMTKEEFLHAIQSYTQVTPYEVEILFHLSELNHPGRKTLCLKDIQAIDPERLKRVSQMDRLINIKAVHHKDDRGVGTAFLESAYRFLLGSVAGACGATAVYPIDLVKTRMQNQRTSGSFVGEVMYKNSLDCFKKVVKFEGLLGLYRGLLPQIVGVAPEKAIKLTMNDYMRDKFTKDGKIPLYGEIIAGGTGGMCQVVFTNPLEIVKIRLQTAGEVQQAGKKIGVFTVLKELGFLGLYKGSRACFLRDIPFSAIYFPAYAHAKLASADEDGMNSPGTLFASAFIAGVPAAGLVTPADVIKTRLQVAARAGQTTYNGVIDCARKLIKEEGPMSLWKGTAARVCRSSPQFAVTLLTYEVLQRLFYVDFAGSRPTGSELATTKTIQDESSTNPDHVGGYKLAAATFSGIEHKFGLFLPKFETSK.

The segment at 1 to 345 (MSFDHLLTSS…CLKDIQAIDP (345 aa)) is N-terminal domain. EF-hand domains lie at 93–121 (YNKETVRLLASAADTTKDGDISFEEFCAF), 127–162 (SPDALYLTAFELFDRNASDTISCDEFEAVIRHTQPL), 165–195 (QDFDFSSEFIKRYFGADKQRNVNYHSFCQLL), and 198–233 (FYEEQGIQAFKRYDKNGNGTISSLDFQQIMTTVKGH). Positions 106, 108, 110, 117, 140, 142, 144, 146, and 151 each coordinate Ca(2+). D211, N213, N215, T217, and D222 together coordinate Ca(2+). Positions 346 to 362 (ERLKRVSQMDRLINIKA) are linker loop domain. Residues 372 to 664 (GTAFLESAYR…RLFYVDFAGS (293 aa)) are carrier domain. Solcar repeat units lie at residues 376–468 (LESA…MRDK), 475–560 (IPLY…AKLA), and 568–656 (NSPG…LQRL). Transmembrane regions (helical) follow at residues 382-399 (FLLGSVAGACGATAVYPI), 443-462 (GLLPQIVGVAPEKAIKLTMN), 485-498 (GTGGMCQVVFTNPL), 535-554 (GSRACFLRDIPFSAIYFPAY), 574-591 (FASAFIAGVPAAGLVTPA), and 631-650 (GTAARVCRSSPQFAVTLLTY). Residues 665–716 (RPTGSELATTKTIQDESSTNPDHVGGYKLAAATFSGIEHKFGLFLPKFETSK) form a C-terminal domain region.

Belongs to the mitochondrial carrier (TC 2.A.29) family. As to quaternary structure, homodimer (via N-terminus).

The protein resides in the mitochondrion inner membrane. Its function is as follows. Mitochondrial and calcium-binding carrier that catalyzes the calcium-dependent exchange of cytoplasmic glutamate with mitochondrial aspartate across the mitochondrial inner membrane. This chain is Probable calcium-binding mitochondrial carrier K02F3.2, found in Caenorhabditis elegans.